Here is a 193-residue protein sequence, read N- to C-terminus: Flagellar transcriptional regulator FlhC (193 aa).

4 residues coordinate Zn(2+): Cys137, Cys140, Cys158, and Cys161.

Belongs to the FlhC family. Heterohexamer composed of two FlhC and four FlhD subunits. Each FlhC binds a FlhD dimer, forming a heterotrimer, and a hexamer assembles by dimerization of two heterotrimers. The cofactor is Zn(2+).

The protein localises to the cytoplasm. Its function is as follows. Functions in complex with FlhD as a master transcriptional regulator that regulates transcription of several flagellar and non-flagellar operons by binding to their promoter region. Activates expression of class 2 flagellar genes, including fliA, which is a flagellum-specific sigma factor that turns on the class 3 genes. Also regulates genes whose products function in a variety of physiological pathways. This chain is Flagellar transcriptional regulator FlhC, found in Pectobacterium carotovorum (Erwinia carotovora).